A 262-amino-acid chain; its full sequence is Phosphatidylglycerol--prolipoprotein diacylglyceryl transferase (262 aa).

4 consecutive transmembrane segments (helical) span residues 9 to 29, 41 to 61, 80 to 100, and 109 to 129; these read LGPL…ILAV, IIPD…ILGA, IFAI…GALV, and LINT…AQSL. Arg-131 provides a ligand contact to a 1,2-diacyl-sn-glycero-3-phospho-(1'-sn-glycerol). 3 helical membrane-spanning segments follow: residues 167-187, 197-217, and 226-246; these read QPTF…ILIF, GHIT…IEGM, and GFRV…MIVI.

This sequence belongs to the Lgt family.

Its subcellular location is the cell membrane. It catalyses the reaction L-cysteinyl-[prolipoprotein] + a 1,2-diacyl-sn-glycero-3-phospho-(1'-sn-glycerol) = an S-1,2-diacyl-sn-glyceryl-L-cysteinyl-[prolipoprotein] + sn-glycerol 1-phosphate + H(+). Its pathway is protein modification; lipoprotein biosynthesis (diacylglyceryl transfer). Its function is as follows. Catalyzes the transfer of the diacylglyceryl group from phosphatidylglycerol to the sulfhydryl group of the N-terminal cysteine of a prolipoprotein, the first step in the formation of mature lipoproteins. The chain is Phosphatidylglycerol--prolipoprotein diacylglyceryl transferase from Streptococcus pneumoniae serotype 4 (strain ATCC BAA-334 / TIGR4).